We begin with the raw amino-acid sequence, 458 residues long: Ammonium transporter Rh type B (458 aa).

Residues 1-13 (MAKSPRRVAGRRL) lie on the Cytoplasmic side of the membrane. A helical membrane pass occupies residues 14 to 34 (LLPLLCLFFQGATAILFAIFV). Over 35-61 (RYDQQTDAALWHGGNHSNADNEFYFRY) the chain is Extracellular. Asn-49 is a glycosylation site (N-linked (GlcNAc...) asparagine). The helical transmembrane segment at 62–82 (PSFQDVHAMVFVGFGFLMVFL) threads the bilayer. The Cytoplasmic segment spans residues 83–86 (QRYG). The helical transmembrane segment at 87 to 107 (YSSLGFTFLLGAFALQWATLV) threads the bilayer. Residues 108-124 (QGFLHSFHGGHIHVGME) are Extracellular-facing. Residues 125–145 (SLINADFCAGAVLISFGAVLG) form a helical membrane-spanning segment. Residues 146-149 (KTGP) lie on the Cytoplasmic side of the membrane. The helical transmembrane segment at 150 to 170 (AQLLLMALLEVALFGLNEFVL) threads the bilayer. The Extracellular portion of the chain corresponds to 171 to 178 (LCLLGVRD). Residues 179-201 (AGGSMTIHTFGAYFGLVLSRVLY) form a helical membrane-spanning segment. Residues 202-219 (RPHLEKSQHRQGSVYHSD) lie on the Cytoplasmic side of the membrane. Residues 220–240 (LFAMIGTIFLWIFWPSFNSAL) traverse the membrane as a helical segment. Over 241–251 (TSRGDGQPRTA) the chain is Extracellular. The helical transmembrane segment at 252–272 (LNTYYSLTASTLSTFALSALV) threads the bilayer. At 273-282 (GKDGRLDMVH) the chain is on the cytoplasmic side. A helical membrane pass occupies residues 283–303 (VQNAALAGGVVVGTASEMMLT). A topological domain (extracellular) is located at residue Pro-304. A helical transmembrane segment spans residues 305 to 325 (FGALAAGCLAGAISTLGYKFF). Over 326-346 (TPILESKLKIQDTCGVHNLHG) the chain is Cytoplasmic. Residues 347–367 (MPGVLGALLGALMTGLTTHEA) form a helical membrane-spanning segment. The Extracellular portion of the chain corresponds to 368–393 (YGDGLQSVFPLIAEGQRSATSQAIYQ). The helical transmembrane segment at 394–414 (LFGLSVTLLFASAGGVLGGLL) threads the bilayer. Residues 415–458 (LKLPFLDAPPDSQCYEDQMCWEVPGEHGYEAQEALRVEEPDTEA) lie on the Cytoplasmic side of the membrane. The interval 416–424 (KLPFLDAPP) is interaction with ANK3. Residues 429–432 (YEDQ) carry the Basolateral sorting signal motif.

It belongs to the ammonium transporter (TC 2.A.49) family. Rh subfamily. As to quaternary structure, interacts (via C-terminus) with ANK2 and ANK3; required for targeting to the basolateral membrane. Post-translationally, N-glycosylated.

The protein localises to the cell membrane. Its subcellular location is the basolateral cell membrane. It carries out the reaction NH4(+)(in) = NH4(+)(out). It catalyses the reaction methylamine(out) = methylamine(in). The enzyme catalyses CO2(out) = CO2(in). In terms of biological role, ammonium transporter involved in the maintenance of acid-base homeostasis. Transports ammonium and its related derivative methylammonium across the basolateral plasma membrane of epithelial cells likely contributing to renal transepithelial ammonia transport and ammonia metabolism. May transport either NH4(+) or NH3 ammonia species predominantly mediating an electrogenic NH4(+) transport. May act as a CO2 channel providing for renal acid secretion. This chain is Ammonium transporter Rh type B (RHBG), found in Oryctolagus cuniculus (Rabbit).